Consider the following 479-residue polypeptide: MPVSDFQPVIGLEVHAQLLTQSKIFCGCSTAFGAEPNRNTCPVCLGMPGVLPVLNQRVAEFAVRTGLALECTIRPTSVWSRKNYFYPDLPKGYQITQFDQPICEHGRLVIDTPQGEKAIRILRIHMEEDAGKSVHDAGGGQSLVDLNRAGVPLLEIVSQPDLRDADEAVEYLKAMRDVLVYLGVNDGNLEEGSFRCDANVSVMPKGSTTFGQRCELKNLNSFRFLKQAIEYEIARQVDVIESGGKVVQETRLWDVNKGVTRSMRSKEEAHDYRYFPEPDLPPLHVSAEAIAAAAKALPELPRAKLQRFTSQYGLPAYDARILTAERPLADYFEACAGHYKDYKKLSNWFLGELMRLLKEEGTPLSALRFTPAQLGELLGAVDQGMVSANAGKDVLGEMFRTGKAPADIIAEKGLAQVSDTGAIEAVVDDILAKNAGEIEKYRAGKKQVFGFFVGQVMRAMKGKGNPALVNELLKKKLGD.

The protein belongs to the GatB/GatE family. GatB subfamily. As to quaternary structure, heterotrimer of A, B and C subunits.

It catalyses the reaction L-glutamyl-tRNA(Gln) + L-glutamine + ATP + H2O = L-glutaminyl-tRNA(Gln) + L-glutamate + ADP + phosphate + H(+). The catalysed reaction is L-aspartyl-tRNA(Asn) + L-glutamine + ATP + H2O = L-asparaginyl-tRNA(Asn) + L-glutamate + ADP + phosphate + 2 H(+). Allows the formation of correctly charged Asn-tRNA(Asn) or Gln-tRNA(Gln) through the transamidation of misacylated Asp-tRNA(Asn) or Glu-tRNA(Gln) in organisms which lack either or both of asparaginyl-tRNA or glutaminyl-tRNA synthetases. The reaction takes place in the presence of glutamine and ATP through an activated phospho-Asp-tRNA(Asn) or phospho-Glu-tRNA(Gln). The polypeptide is Aspartyl/glutamyl-tRNA(Asn/Gln) amidotransferase subunit B (Myxococcus xanthus (strain DK1622)).